We begin with the raw amino-acid sequence, 176 residues long: Inner membrane-spanning protein YciB (176 aa).

The next 5 membrane-spanning stretches (helical) occupy residues 24–44, 49–69, 76–96, 119–139, and 149–169; these read TATA…AFRH, PMLW…LVLH, WKPT…QLAF, LSVV…FVAY, and FKLF…SLWL.

The protein belongs to the YciB family.

It localises to the cell inner membrane. Plays a role in cell envelope biogenesis, maintenance of cell envelope integrity and membrane homeostasis. This is Inner membrane-spanning protein YciB from Paraburkholderia phytofirmans (strain DSM 17436 / LMG 22146 / PsJN) (Burkholderia phytofirmans).